A 134-amino-acid polypeptide reads, in one-letter code: Probable thionin-2.4 (134 aa).

An N-terminal signal peptide occupies residues 1 to 24 (MEGKTLIVSVLIMSLFMAQNQVDA). Intrachain disulfides connect Cys27-Cys64, Cys28-Cys56, and Cys40-Cys50. Positions 71 to 134 (DILENTGDAV…KGSMNAVENA (64 aa)) are cleaved as a propeptide — acidic domain.

It belongs to the plant thionin (TC 1.C.44) family.

Its subcellular location is the secreted. Its function is as follows. Thionins are small plant proteins which are toxic to animal cells. They seem to exert their toxic effect at the level of the cell membrane. Their precise function is not known. This is Probable thionin-2.4 from Arabidopsis thaliana (Mouse-ear cress).